We begin with the raw amino-acid sequence, 273 residues long: Dermonecrotic toxin LruSicTox-alphaIC1d (273 aa).

Residue histidine 5 is part of the active site. Positions 25 and 27 each coordinate Mg(2+). The active-site Nucleophile is histidine 41. 2 disulfide bridges follow: cysteine 45-cysteine 51 and cysteine 47-cysteine 190. Aspartate 85 is a Mg(2+) binding site.

This sequence belongs to the arthropod phospholipase D family. Class II subfamily. Requires Mg(2+) as cofactor. Expressed by the venom gland.

The protein resides in the secreted. It carries out the reaction an N-(acyl)-sphingosylphosphocholine = an N-(acyl)-sphingosyl-1,3-cyclic phosphate + choline. The catalysed reaction is an N-(acyl)-sphingosylphosphoethanolamine = an N-(acyl)-sphingosyl-1,3-cyclic phosphate + ethanolamine. The enzyme catalyses a 1-acyl-sn-glycero-3-phosphocholine = a 1-acyl-sn-glycero-2,3-cyclic phosphate + choline. It catalyses the reaction a 1-acyl-sn-glycero-3-phosphoethanolamine = a 1-acyl-sn-glycero-2,3-cyclic phosphate + ethanolamine. Functionally, dermonecrotic toxins cleave the phosphodiester linkage between the phosphate and headgroup of certain phospholipids (sphingolipid and lysolipid substrates), forming an alcohol (often choline) and a cyclic phosphate. This toxin acts on sphingomyelin (SM). It may also act on ceramide phosphoethanolamine (CPE), lysophosphatidylcholine (LPC) and lysophosphatidylethanolamine (LPE), but not on lysophosphatidylserine (LPS), and lysophosphatidylglycerol (LPG). It acts by transphosphatidylation, releasing exclusively cyclic phosphate products as second products. Induces dermonecrosis, hemolysis, increased vascular permeability, edema, inflammatory response, and platelet aggregation. This Loxosceles rufescens (Mediterranean recluse spider) protein is Dermonecrotic toxin LruSicTox-alphaIC1d.